The sequence spans 174 residues: N5-carboxyaminoimidazole ribonucleotide mutase (174 aa).

The substrate site is built by Ser-16, Asp-19, and Arg-46.

The protein belongs to the AIR carboxylase family. Class I subfamily.

The enzyme catalyses 5-carboxyamino-1-(5-phospho-D-ribosyl)imidazole + H(+) = 5-amino-1-(5-phospho-D-ribosyl)imidazole-4-carboxylate. It functions in the pathway purine metabolism; IMP biosynthesis via de novo pathway; 5-amino-1-(5-phospho-D-ribosyl)imidazole-4-carboxylate from 5-amino-1-(5-phospho-D-ribosyl)imidazole (N5-CAIR route): step 2/2. Its function is as follows. Catalyzes the conversion of N5-carboxyaminoimidazole ribonucleotide (N5-CAIR) to 4-carboxy-5-aminoimidazole ribonucleotide (CAIR). The sequence is that of N5-carboxyaminoimidazole ribonucleotide mutase from Mycobacterium tuberculosis (strain CDC 1551 / Oshkosh).